A 191-amino-acid chain; its full sequence is UMP-CMP kinase 2 (191 aa).

12-17 (GSGKGT) contacts ATP. The segment at 32-62 (SAGDLLRAERQREGSEFGALIESHIKNGSIV) is NMP. Residues R38, 60 to 62 (SIV), and 88 to 91 (GFPR) each bind a ribonucleoside 5'-phosphate. CMP is bound at residue N95. Residues 128 to 136 (NRGQGRTDD) are LID. Position 129 (R129) interacts with ATP. R133 and R144 together coordinate a ribonucleoside 5'-phosphate. ATP is bound at residue R172.

The protein belongs to the adenylate kinase family. UMP-CMP kinase subfamily. Monomer. Requires Mg(2+) as cofactor. In terms of tissue distribution, expressed in neurons and the pharynx.

The protein localises to the cytoplasm. Its subcellular location is the nucleus. It carries out the reaction CMP + ATP = CDP + ADP. It catalyses the reaction dCMP + ATP = dCDP + ADP. The catalysed reaction is UMP + ATP = UDP + ADP. Functionally, catalyzes the phosphorylation of pyrimidine nucleoside monophosphates at the expense of ATP. Plays an important role in de novo pyrimidine nucleotide biosynthesis. Has preference for UMP and CMP as phosphate acceptors. The protein is UMP-CMP kinase 2 of Caenorhabditis elegans.